The sequence spans 513 residues: ATP synthase subunit alpha (513 aa).

169–176 provides a ligand contact to ATP; that stretch reads GDRQIGKT.

Belongs to the ATPase alpha/beta chains family. F-type ATPases have 2 components, CF(1) - the catalytic core - and CF(0) - the membrane proton channel. CF(1) has five subunits: alpha(3), beta(3), gamma(1), delta(1), epsilon(1). CF(0) has three main subunits: a(1), b(2) and c(9-12). The alpha and beta chains form an alternating ring which encloses part of the gamma chain. CF(1) is attached to CF(0) by a central stalk formed by the gamma and epsilon chains, while a peripheral stalk is formed by the delta and b chains.

The protein resides in the cell inner membrane. It catalyses the reaction ATP + H2O + 4 H(+)(in) = ADP + phosphate + 5 H(+)(out). Produces ATP from ADP in the presence of a proton gradient across the membrane. The alpha chain is a regulatory subunit. The polypeptide is ATP synthase subunit alpha (Francisella tularensis subsp. tularensis (strain WY96-3418)).